The following is a 396-amino-acid chain: Ornithine aminotransferase 2 (396 aa).

N6-(pyridoxal phosphate)lysine is present on lysine 255.

It belongs to the class-III pyridoxal-phosphate-dependent aminotransferase family. OAT subfamily. It depends on pyridoxal 5'-phosphate as a cofactor.

The protein resides in the cytoplasm. The enzyme catalyses a 2-oxocarboxylate + L-ornithine = L-glutamate 5-semialdehyde + an L-alpha-amino acid. It participates in amino-acid biosynthesis; L-proline biosynthesis; L-glutamate 5-semialdehyde from L-ornithine: step 1/1. Its function is as follows. Catalyzes the interconversion of ornithine to glutamate semialdehyde. The sequence is that of Ornithine aminotransferase 2 from Staphylococcus saprophyticus subsp. saprophyticus (strain ATCC 15305 / DSM 20229 / NCIMB 8711 / NCTC 7292 / S-41).